A 368-amino-acid chain; its full sequence is Endophilin-A2 (368 aa).

Residues 1–21 are membrane-binding amphipathic helix; that stretch reads MSVAGLKKQFYKASQLVSEKV. In terms of domain architecture, BAR spans 18–249; sequence SEKVGGAEGT…LKRRVREASS (232 aa). The interval 60–87 is required for dimerization upon membrane association; that stretch reads PNPASRAKLTMLNTVSKIRGQVKNPGYP. Positions 180 to 250 form a coiled coil; sequence DEELRQALEK…KRRVREASSR (71 aa). The interaction with ARC stretch occupies residues 218–254; sequence LVDAQLDYHRQAVQILEELADKLKRRVREASSRPKRE. The segment at 244–307 is disordered; that stretch reads VREASSRPKR…MPSKSMPPLD (64 aa). Residues 245 to 263 show a composition bias toward basic and acidic residues; that stretch reads REASSRPKREFKPRPREPF. 2 positions are modified to phosphoserine: Ser288 and Ser292. The SH3 domain maps to 306–365; sequence LDQPSCKALYDFEPENDGELGFREGDLITLTNQIDENWYEGMLHGQSGFFPLSYVQVLVP. Tyr315 is modified (phosphotyrosine).

It belongs to the endophilin family. As to quaternary structure, interacts with ARC, SYNJ1 and DNM1. Interacts with PDCD6IP. Interacts with BIN2.

The protein localises to the cytoplasm. The protein resides in the early endosome membrane. It localises to the cell projection. It is found in the podosome. Its function is as follows. Implicated in endocytosis. May recruit other proteins to membranes with high curvature. The sequence is that of Endophilin-A2 (Sh3gl1) from Mus musculus (Mouse).